The chain runs to 136 residues: Large ribosomal subunit protein uL16c (136 aa).

The interval 1–20 (MLSPKRTRFRKQHRGRMKGK) is disordered.

Belongs to the universal ribosomal protein uL16 family. As to quaternary structure, part of the 50S ribosomal subunit.

The protein resides in the plastid. Its subcellular location is the chloroplast. This chain is Large ribosomal subunit protein uL16c, found in Lolium perenne (Perennial ryegrass).